A 116-amino-acid polypeptide reads, in one-letter code: UPF0298 protein EF_2453 (116 aa).

This sequence belongs to the UPF0298 family.

Its subcellular location is the cytoplasm. The sequence is that of UPF0298 protein EF_2453 from Enterococcus faecalis (strain ATCC 700802 / V583).